The following is a 354-amino-acid chain: Rhodopsin (354 aa).

Residues 1 to 36 (MNGTEGPNFYVPMSNKTGVVRSPFDYPQYYLAEPWQ) lie on the Extracellular side of the membrane. Residues N2 and N15 are each glycosylated (N-linked (GlcNAc...) asparagine). A helical membrane pass occupies residues 37–61 (YSALAAYMFLLILLGLPINFMTLFV). The Cytoplasmic portion of the chain corresponds to 62 to 73 (TIQHKKLRTPLN). Residues 74-96 (YILLNLVFANHFMVLCGFTVTMY) form a helical membrane-spanning segment. Over 97-110 (TSMHGYFIFGPTGC) the chain is Extracellular. A disulfide bridge links C110 with C187. Residues 111–133 (YIEGFFATLGGEVALWSLVVLAV) form a helical membrane-spanning segment. The short motif at 134–136 (ERY) is the 'Ionic lock' involved in activated form stabilization element. The Cytoplasmic portion of the chain corresponds to 134–152 (ERYIVVCKPMANFRFGENH). Residues 153–173 (AIMGVAFTWIMALSCAAPPLF) form a helical membrane-spanning segment. Topologically, residues 174-202 (GWSRYIPEGMQCSCGVDYYTLKPEVNNES) are extracellular. A helical transmembrane segment spans residues 203–224 (FVIYMFIVHFTIPLIVIFFCYG). Topologically, residues 225–252 (RLLCTVKEAAAQQQESLTTQKAEKEVTR) are cytoplasmic. The chain crosses the membrane as a helical span at residues 253–274 (MVVIMVVFFLICWVPYAYVAFY). Residues 275–286 (IFTHQGSNFGPV) are Extracellular-facing. A helical transmembrane segment spans residues 287 to 308 (FMTVPAFFAKSSAIYNPVIYIV). An N6-(retinylidene)lysine modification is found at K296. Residues 309 to 354 (LNKQFRNCLITTLCCGKNPFGDEDGSSAATSKTEASSVSSSQVSPA) are Cytoplasmic-facing. 2 S-palmitoyl cysteine lipidation sites follow: C322 and C323. The disordered stretch occupies residues 331–354 (EDGSSAATSKTEASSVSSSQVSPA). Residues 334 to 354 (SSAATSKTEASSVSSSQVSPA) are compositionally biased toward low complexity.

It belongs to the G-protein coupled receptor 1 family. Opsin subfamily. Post-translationally, contains one covalently linked retinal chromophore. Upon light absorption, the covalently bound 11-cis-retinal is converted to all-trans-retinal. After hydrolysis of the Schiff base and release of the covalently bound all-trans-retinal, active rhodopsin is regenerated by binding of a fresh molecule of 11-cis-retinal.

It localises to the membrane. Its subcellular location is the cell projection. The protein localises to the cilium. The protein resides in the photoreceptor outer segment. Its function is as follows. Photoreceptor required for image-forming vision at low light intensity. Required for photoreceptor cell viability after birth. Light-induced isomerization of 11-cis to all-trans retinal triggers a conformational change that activates signaling via G-proteins. Subsequent receptor phosphorylation mediates displacement of the bound G-protein alpha subunit by arrestin and terminates signaling. The protein is Rhodopsin (rho) of Xenopus laevis (African clawed frog).